Reading from the N-terminus, the 118-residue chain is UPF0102 protein DICTH_1420 (118 aa).

Belongs to the UPF0102 family.

This is UPF0102 protein DICTH_1420 from Dictyoglomus thermophilum (strain ATCC 35947 / DSM 3960 / H-6-12).